A 483-amino-acid chain; its full sequence is MFS-type transporter hepF (483 aa).

A disordered region spans residues 1-31; sequence METPAGKADRPRDHDSEQSQDNVVSWEGEDD. The segment covering 7–17 has biased composition (basic and acidic residues); the sequence is KADRPRDHDSE. Helical transmembrane passes span 89 to 109, 124 to 144, 147 to 167, 179 to 199, 206 to 226, 276 to 296, 311 to 331, 357 to 377, 385 to 405, 416 to 436, and 448 to 468; these read TIVV…AAPI, ILYT…MLIV, FFAG…VADL, FVTL…GFLT, WVFW…ILFT, PISL…YVLV, IGIS…GLWI, PMMI…GWSV, MPIV…MPMV, AASA…VLPL, and GWGN…LIAI.

It belongs to the major facilitator superfamily.

The protein resides in the cell membrane. MFS-type transporter; part of the gene cluster that mediates the biosynthesis of heptelidic acid (HA), a sesquiterpene lactone that acts as an inhibitor of glyceraldehyde-3-phosphatedehydrogenase (GAPDH) and a growth inhibitor of the salt-tolerant lactic acid bacteria in soy sauce brewing. Might be required for efficient secretion of heptelidic acid. The sequence is that of MFS-type transporter hepF (hepF) from Aspergillus oryzae (strain ATCC 42149 / RIB 40) (Yellow koji mold).